The chain runs to 982 residues: MLKAKALCYRFFKSRKATTCALSSELFPSTSAAVFSAASGDHRSRCLSLIVKLGRRGLLDSAREVIRRVIDGSSSISEAALVADFAVDNGIELDSSCYGALIRKLTEMGQPGVAETFYNQRVIGNGIVPDSSVLDSMVFCLVKLRRFDEARAHLDRIIASGYAPSRNSSSLVVDELCNQDRFLEAFHCFEQVKERGSGLWLWCCKRLFKGLCGHGHLNEAIGMLDTLCGMTRMPLPVNLYKSLFYCFCKRGCAAEAEALFDHMEVDGYYVDKVMYTCLMKEYCKDNNMTMAMRLYLRMVERSFELDPCIFNTLIHGFMKLGMLDKGRVMFSQMIKKGVQSNVFTYHIMIGSYCKEGNVDYALRLFVNNTGSEDISRNVHCYTNLIFGFYKKGGMDKAVDLLMRMLDNGIVPDHITYFVLLKMLPKCHELKYAMVILQSILDNGCGINPPVIDDLGNIEVKVESLLGEIARKDANLAAVGLAVVTTALCSQRNYIAALSRIEKMVNLGCTPLPFSYNSVIKCLFQENIIEDLASLVNIIQELDFVPDVDTYLIVVNELCKKNDRDAAFAIIDAMEELGLRPTVAIYSSIIGSLGKQGRVVEAEETFAKMLESGIQPDEIAYMIMINTYARNGRIDEANELVEEVVKHFLRPSSFTYTVLISGFVKMGMMEKGCQYLDKMLEDGLSPNVVLYTALIGHFLKKGDFKFSFTLFGLMGENDIKHDHIAYITLLSGLWRAMARKKKRQVIVEPGKEKLLQRLIRTKPLVSIPSSLGNYGSKSFAMEVIGKVKKSIIPNLYLHNTIITGYCAAGRLDEAYNHLESMQKEGIVPNLVTYTILMKSHIEAGDIESAIDLFEGTNCEPDQVMYSTLLKGLCDFKRPLDALALMLEMQKSGINPNKDSYEKLLQCLCYSRLTMEAVKVVKDMAALDIWPRSINHTWLIYILCEEKKLREARALFAIMVQSGRSLLNCTKPGLLKMLNQNQQL.

PPR repeat units lie at residues 94-129 (DSSC…GIVP), 130-164 (DSSV…GYAP), 165-199 (SRNS…GSGL), 200-234 (WLWC…TRMP), 236-270 (PVNL…GYYV), 271-305 (DKVM…SFEL), 306-340 (DPCI…GVQS), 341-376 (NVFT…DISR), 377-411 (NVHC…GIVP), 412-446 (DHIT…GCGI), 476-510 (AAVG…GCTP), 511-545 (LPFS…DFVP), 546-580 (DVDT…GLRP), 581-615 (TVAI…GIQP), 616-650 (DEIA…FLRP), 651-685 (SSFT…GLSP), 686-720 (NVVL…DIKH), 721-755 (DHIA…KLLQ), 759-789 (RTKP…VKKS), 793-827 (NLYL…GIVP), 828-858 (NLVT…TNCE), 860-894 (DQVM…GINP), 895-929 (NKDS…DIWP), and 930-964 (RSIN…GRSL).

Belongs to the PPR family. P subfamily.

The sequence is that of Pentatricopeptide repeat-containing protein At5g62370 from Arabidopsis thaliana (Mouse-ear cress).